The sequence spans 240 residues: Uridylate kinase (240 aa).

12–15 (KLSG) contributes to the ATP binding site. Gly54 is a binding site for UMP. ATP contacts are provided by Gly55 and Arg59. UMP contacts are provided by residues Asp74 and 135–142 (TGNPFFTT). ATP-binding residues include Thr162, Tyr168, and Asp171.

The protein belongs to the UMP kinase family. As to quaternary structure, homohexamer.

It is found in the cytoplasm. It catalyses the reaction UMP + ATP = UDP + ADP. It participates in pyrimidine metabolism; CTP biosynthesis via de novo pathway; UDP from UMP (UMPK route): step 1/1. Inhibited by UTP. Its function is as follows. Catalyzes the reversible phosphorylation of UMP to UDP. In Xanthomonas campestris pv. campestris (strain ATCC 33913 / DSM 3586 / NCPPB 528 / LMG 568 / P 25), this protein is Uridylate kinase.